A 150-amino-acid polypeptide reads, in one-letter code: Snaclec 7 (150 aa).

The first 23 residues, 1 to 23 (MGRFISISFGLLVVFLSLSGTGA), serve as a signal peptide directing secretion. 3 cysteine pairs are disulfide-bonded: C27-C38, C55-C144, and C121-C136. Positions 34–145 (YEGYCYKVFN…CNDPRYFVCK (112 aa)) constitute a C-type lectin domain.

Belongs to the snaclec family. As to quaternary structure, heterodimer; disulfide-linked.

Its subcellular location is the secreted. Its function is as follows. Interferes with one step of hemostasis (modulation of platelet aggregation, or coagulation cascade, for example). This Daboia siamensis (Eastern Russel's viper) protein is Snaclec 7.